A 144-amino-acid chain; its full sequence is Large ribosomal subunit protein uL16 (144 aa).

The protein belongs to the universal ribosomal protein uL16 family. Part of the 50S ribosomal subunit.

Its function is as follows. Binds 23S rRNA and is also seen to make contacts with the A and possibly P site tRNAs. The sequence is that of Large ribosomal subunit protein uL16 from Bacillus licheniformis (strain ATCC 14580 / DSM 13 / JCM 2505 / CCUG 7422 / NBRC 12200 / NCIMB 9375 / NCTC 10341 / NRRL NRS-1264 / Gibson 46).